The primary structure comprises 160 residues: Putative oxygenase ATEG_00330 (160 aa).

The 77-residue stretch at 24-100 (HYFGTALHAK…RNIAADPEFA (77 aa)) folds into the EthD domain.

It belongs to the tpcK family.

In terms of biological role, putative oxygenase; part of the gene cluster that mediates the biosynthesis of isoflavipucine. The PKS part of the PKS-NRPS ATEG_00325 probably assembles a triketide from an acetyl starter and two malonyl-CoA extender units. The poly-beta-keto intermediate would then be fused to the leucine unit by the NRPS part. The resulting amide would be liberated from the PKS-NRPS through reductive release of the linear PKS-NRPS product from the enzyme complex. Further steps in isoflapucine synthesis include a cyclization step, an oxidation step, a hydrolysis step involving a trans-amidation, and an additional oxidation step, leading to flavipucine. Formation of isoflavipucine from flavipucine requires an unusual rearrangement. Alternative rearrangement reactions could build up rubrobramide, representing a branching of flavipucine biosynthesis. The enzymes involved in the post-PKS-NRPS steps have not been identified yet, but the putative oxygenases ATEG_003329 and ATEG_00330 encoded by the cluster could play a role. The protein is Putative oxygenase ATEG_00330 of Aspergillus terreus (strain NIH 2624 / FGSC A1156).